Here is a 182-residue protein sequence, read N- to C-terminus: Adenylate kinase (182 aa).

12 to 17 (GAGKGT) is an ATP binding site. The tract at residues 32–61 (STGELLRKEIEMNTNLGIQVKDIMNRGELV) is NMP. AMP contacts are provided by residues Thr-33, Arg-38, 59–61 (ELV), 85–88 (GYPR), and Gln-92. Residues 126–132 (LRGRKDD) are LID. Arg-127 serves as a coordination point for ATP. AMP-binding residues include Arg-129 and Arg-140. Residue Arg-168 participates in ATP binding.

Belongs to the adenylate kinase family. Monomer.

The protein localises to the cytoplasm. It catalyses the reaction AMP + ATP = 2 ADP. It participates in purine metabolism; AMP biosynthesis via salvage pathway; AMP from ADP: step 1/1. Functionally, catalyzes the reversible transfer of the terminal phosphate group between ATP and AMP. Plays an important role in cellular energy homeostasis and in adenine nucleotide metabolism. The sequence is that of Adenylate kinase from Prochlorococcus marinus (strain AS9601).